We begin with the raw amino-acid sequence, 177 residues long: Small ribosomal subunit protein uS5 (177 aa).

The S5 DRBM domain maps to 19–82 (FIEKLVAIKR…DQAQKQMIKV (64 aa)).

This sequence belongs to the universal ribosomal protein uS5 family. Part of the 30S ribosomal subunit. Contacts proteins S4 and S8.

With S4 and S12 plays an important role in translational accuracy. Functionally, located at the back of the 30S subunit body where it stabilizes the conformation of the head with respect to the body. This chain is Small ribosomal subunit protein uS5, found in Magnetococcus marinus (strain ATCC BAA-1437 / JCM 17883 / MC-1).